A 98-amino-acid chain; its full sequence is Aspartyl/glutamyl-tRNA(Asn/Gln) amidotransferase subunit C (98 aa).

It belongs to the GatC family. In terms of assembly, heterotrimer of A, B and C subunits.

It catalyses the reaction L-glutamyl-tRNA(Gln) + L-glutamine + ATP + H2O = L-glutaminyl-tRNA(Gln) + L-glutamate + ADP + phosphate + H(+). It carries out the reaction L-aspartyl-tRNA(Asn) + L-glutamine + ATP + H2O = L-asparaginyl-tRNA(Asn) + L-glutamate + ADP + phosphate + 2 H(+). In terms of biological role, allows the formation of correctly charged Asn-tRNA(Asn) or Gln-tRNA(Gln) through the transamidation of misacylated Asp-tRNA(Asn) or Glu-tRNA(Gln) in organisms which lack either or both of asparaginyl-tRNA or glutaminyl-tRNA synthetases. The reaction takes place in the presence of glutamine and ATP through an activated phospho-Asp-tRNA(Asn) or phospho-Glu-tRNA(Gln). The protein is Aspartyl/glutamyl-tRNA(Asn/Gln) amidotransferase subunit C of Micrococcus luteus (strain ATCC 4698 / DSM 20030 / JCM 1464 / CCM 169 / CCUG 5858 / IAM 1056 / NBRC 3333 / NCIMB 9278 / NCTC 2665 / VKM Ac-2230) (Micrococcus lysodeikticus).